A 158-amino-acid polypeptide reads, in one-letter code: Small t antigen (158 aa).

Met-1 is subject to N-acetylmethionine; by host. In terms of domain architecture, J spans 12–75; that stretch reads RLMHLLKLPM…LPCLSTQDFI (64 aa). A C4-type; atypical zinc finger spans residues 95 to 106; the sequence is CNFENCNKCLYC. The H1C3-type; atypical zinc-finger motif lies at 112-130; it reads HKSDPPFPKVWGYCLCYKC.

Interacts with host PPP2R1A; the interaction inhibits PP2A activity.

It localises to the host cytoplasm. The protein resides in the host nucleus. Functionally, promotes efficient viral genome replication by accelerating both G1 and S phase progression of the cell cycle. Inhibits host PP2A by binding to the A subunit, thereby displacing lower affinity regulatory B subunit. Inactivation of PP2A in turn results in the transactivation of cyclin A and cyclin D1 promoters. Late during the infection cycle, ST may induce dephosphorylation of host MTOR, leading to the inhibition of cap-dependent translation. May establish and maintain high levels of viral genomes during persistent infection in cell culture. This chain is Small t antigen, found in Mus musculus (Mouse).